The following is a 122-amino-acid chain: Large ribosomal subunit protein uL14c (122 aa).

Belongs to the universal ribosomal protein uL14 family. Part of the 50S ribosomal subunit.

The protein localises to the plastid. Its subcellular location is the chloroplast. Its function is as follows. Binds to 23S rRNA. The protein is Large ribosomal subunit protein uL14c of Marchantia polymorpha (Common liverwort).